A 590-amino-acid chain; its full sequence is Arginine--tRNA ligase (590 aa).

A 'HIGH' region motif is present at residues 131–141 (PNIAKEMHVGH).

It belongs to the class-I aminoacyl-tRNA synthetase family. As to quaternary structure, monomer.

The protein localises to the cytoplasm. It catalyses the reaction tRNA(Arg) + L-arginine + ATP = L-arginyl-tRNA(Arg) + AMP + diphosphate. The protein is Arginine--tRNA ligase of Synechococcus sp. (strain RCC307).